The chain runs to 446 residues: tRNA-2-methylthio-N(6)-dimethylallyladenosine synthase (446 aa).

The region spanning 3–120 is the MTTase N-terminal domain; that stretch reads QKLFIKTYGC…LPEMVNSVAH (118 aa). Residues Cys12, Cys49, Cys83, Cys157, Cys161, and Cys164 each contribute to the [4Fe-4S] cluster site. The region spanning 143-375 is the Radical SAM core domain; sequence SSEGASAFVS…QQRILQFAQD (233 aa). The 65-residue stretch at 378–442 folds into the TRAM domain; the sequence is RKMVGSTQRI…PNSLRGERVD (65 aa).

The protein belongs to the methylthiotransferase family. MiaB subfamily. In terms of assembly, monomer. [4Fe-4S] cluster serves as cofactor.

It localises to the cytoplasm. It catalyses the reaction N(6)-dimethylallyladenosine(37) in tRNA + (sulfur carrier)-SH + AH2 + 2 S-adenosyl-L-methionine = 2-methylsulfanyl-N(6)-dimethylallyladenosine(37) in tRNA + (sulfur carrier)-H + 5'-deoxyadenosine + L-methionine + A + S-adenosyl-L-homocysteine + 2 H(+). In terms of biological role, catalyzes the methylthiolation of N6-(dimethylallyl)adenosine (i(6)A), leading to the formation of 2-methylthio-N6-(dimethylallyl)adenosine (ms(2)i(6)A) at position 37 in tRNAs that read codons beginning with uridine. In Hahella chejuensis (strain KCTC 2396), this protein is tRNA-2-methylthio-N(6)-dimethylallyladenosine synthase.